Reading from the N-terminus, the 340-residue chain is Ketol-acid reductoisomerase (NADP(+)) (340 aa).

Residues 1 to 182 (MRVYYDRDCD…GGGRSGIIET (182 aa)) enclose the KARI N-terminal Rossmann domain. Residues 24–27 (YGSQ), R48, S51, S53, and 83–86 (DELQ) contribute to the NADP(+) site. H108 is an active-site residue. Residue G134 coordinates NADP(+). The region spanning 183-329 (NFRQECETDL…EKLRGMMPWI (147 aa)) is the KARI C-terminal knotted domain. D191, E195, E227, and E231 together coordinate Mg(2+). S252 contacts substrate.

The protein belongs to the ketol-acid reductoisomerase family. Mg(2+) is required as a cofactor.

The enzyme catalyses (2R)-2,3-dihydroxy-3-methylbutanoate + NADP(+) = (2S)-2-acetolactate + NADPH + H(+). The catalysed reaction is (2R,3R)-2,3-dihydroxy-3-methylpentanoate + NADP(+) = (S)-2-ethyl-2-hydroxy-3-oxobutanoate + NADPH + H(+). Its pathway is amino-acid biosynthesis; L-isoleucine biosynthesis; L-isoleucine from 2-oxobutanoate: step 2/4. It functions in the pathway amino-acid biosynthesis; L-valine biosynthesis; L-valine from pyruvate: step 2/4. Involved in the biosynthesis of branched-chain amino acids (BCAA). Catalyzes an alkyl-migration followed by a ketol-acid reduction of (S)-2-acetolactate (S2AL) to yield (R)-2,3-dihydroxy-isovalerate. In the isomerase reaction, S2AL is rearranged via a Mg-dependent methyl migration to produce 3-hydroxy-3-methyl-2-ketobutyrate (HMKB). In the reductase reaction, this 2-ketoacid undergoes a metal-dependent reduction by NADPH to yield (R)-2,3-dihydroxy-isovalerate. The polypeptide is Ketol-acid reductoisomerase (NADP(+)) (Paracoccus denitrificans (strain Pd 1222)).